A 337-amino-acid chain; its full sequence is Calcium-binding protein 39-like (337 aa).

The protein belongs to the Mo25 family. In terms of assembly, component of a trimeric complex composed of STK11/LKB1, STRAD (STRADA or STRADB) and CAB39/MO25 (CAB39/MO25alpha or CAB39L/MO25beta): the complex tethers STK11/LKB1 in the cytoplasm and stimulates its catalytic activity.

Its function is as follows. Component of a complex that binds and activates STK11/LKB1. In the complex, required to stabilize the interaction between CAB39/MO25 (CAB39/MO25alpha or CAB39L/MO25beta) and STK11/LKB1. The sequence is that of Calcium-binding protein 39-like (CAB39L) from Homo sapiens (Human).